A 324-amino-acid chain; its full sequence is tRNA N6-adenosine threonylcarbamoyltransferase (324 aa).

Fe cation is bound by residues H107, H111, and Y128. Substrate is bound by residues 128–132 (YVSGG), D160, G173, E177, and N256. D284 is a binding site for Fe cation.

This sequence belongs to the KAE1 / TsaD family. Monomer. Component of the KEOPS complex that consists of Kae1, Bud32, Cgi121 and Pcc1; the whole complex dimerizes. Fe(2+) is required as a cofactor.

The protein resides in the cytoplasm. It catalyses the reaction L-threonylcarbamoyladenylate + adenosine(37) in tRNA = N(6)-L-threonylcarbamoyladenosine(37) in tRNA + AMP + H(+). Functionally, required for the formation of a threonylcarbamoyl group on adenosine at position 37 (t(6)A37) in tRNAs that read codons beginning with adenine. Is a component of the KEOPS complex that is probably involved in the transfer of the threonylcarbamoyl moiety of threonylcarbamoyl-AMP (TC-AMP) to the N6 group of A37. Kae1 likely plays a direct catalytic role in this reaction, but requires other protein(s) of the complex to fulfill this activity. The sequence is that of tRNA N6-adenosine threonylcarbamoyltransferase from Methanothrix thermoacetophila (strain DSM 6194 / JCM 14653 / NBRC 101360 / PT) (Methanosaeta thermophila).